The chain runs to 168 residues: Desumoylating isopeptidase 1 (168 aa).

A PPPDE domain is found at 7 to 149; the sequence is YPVKLYVYDL…FGQALRPLLD (143 aa). Histidine 38 is an active-site residue. Residues 83-91 carry the Nuclear export signal 1 motif; sequence IFLEYLSSL. Cysteine 108 is a catalytic residue. The Nuclear export signal 2 motif lies at 139–153; sequence PFGQALRPLLDSIQI.

The protein belongs to the DeSI family. In terms of assembly, homodimer. Interacts with UBQLN4; leading to the export of UBQLN4 from the nucleus.

It localises to the cytoplasm. Its subcellular location is the nucleus. It catalyses the reaction S-hexadecanoyl-L-cysteinyl-[protein] + H2O = L-cysteinyl-[protein] + hexadecanoate + H(+). Its activity is regulated as follows. Palmostatin B inhibits its palmitoyl protein thioesterase activity. Its function is as follows. Protease which deconjugates SUMO1, SUMO2 and SUMO3 from some substrate proteins. Has isopeptidase but not SUMO-processing activity. Desumoylates ZBTB46. Collaborates with UBQLN4 in the export of ubiquitinated proteins from the nucleus to the cytoplasm. Exhibits palmitoyl protein thioesterase (S-depalmitoylation) activity towards synthetic substrates 4-methylumbelliferyl-6-S-palmitoyl-beta-D-glucopyranoside and S-depalmitoylation probe 5 (DPP-5). The protein is Desumoylating isopeptidase 1 of Homo sapiens (Human).